A 393-amino-acid chain; its full sequence is Cysteine protease ATG4B (393 aa).

M1 carries the post-translational modification N-acetylmethionine. Phosphoserine is present on S34. C74 functions as the Nucleophile in the catalytic mechanism. C189 bears the S-nitrosocysteine mark. Active-site residues include D278 and H280. S-nitrosocysteine occurs at positions 292 and 301. Residues C292 and C361 are joined by a disulfide bond. 2 positions are modified to phosphoserine: S316 and S383. The LIR motif lies at 388-391 (FEIL). S392 bears the Phosphoserine mark.

It belongs to the peptidase C54 family. Interacts with PFKP; promoting phosphorylation of ATG4B at Ser-34. Interacts with GBP7. In terms of processing, phosphorylation at Ser-383 and Ser-392 promotes autophagy by increasing protein delipidation activity without affecting proteolytic activation of ATG8 proteins. Phosphorylation at Ser-316 by ULK1 inhibits autophagy by decreasing both proteolytic activation and delipidation activities. Phosphorylation at Ser-316 is dephosphorylated by protein phosphatase 2A (PP2A). Phosphorylation at Ser-34 by AKT2 promotes its hydrolase activity, leading to increased proteolytic activation and delipidation of ATG8 family proteins. Phosphorylation at Ser-34 by AKT1 promotes mitochondrial localization and inhibition of the F1F0-ATP synthase activity, leading to elevation of mitochondrial reactive oxygen species (ROS). Ubiquitinated by RNF5, leading to its degradation by the proteasome. Post-translationally, S-nitrosylation at Cys-189 and Cys-292 in response to high glucose decreases both proteolytic activation and delipidation activities. In terms of processing, O-glycosylated by OGT, leading to increase protease activity, thereby promoting the proteolytic activation of ATG8 family proteins. Forms reversible intrachain disulfide bonds in response to oxidative stress. Forms interchain disulfide bonds, leading to formation of homooligomers in response to oxidation.

The protein localises to the cytoplasm. It is found in the cytosol. It localises to the cytoplasmic vesicle. Its subcellular location is the autophagosome. The protein resides in the endoplasmic reticulum. The protein localises to the mitochondrion. It carries out the reaction [protein]-C-terminal L-amino acid-glycyl-phosphatidylethanolamide + H2O = [protein]-C-terminal L-amino acid-glycine + a 1,2-diacyl-sn-glycero-3-phosphoethanolamine. It catalyses the reaction [protein]-C-terminal L-amino acid-glycyl-phosphatidylserine + H2O = [protein]-C-terminal L-amino acid-glycine + a 1,2-diacyl-sn-glycero-3-phospho-L-serine. With respect to regulation, inhibited by N-ethylmaleimide. Redox-regulated during autophagy since reducing conditions activate ATG4A whereas an oxidizing environment such as the presence of H(2)O(2) inhibits its activity. The cysteine protease activity compounds is inhibited by styrylquinoline compounds 4-28 and LV-320. Functionally, cysteine protease that plays a key role in autophagy by mediating both proteolytic activation and delipidation of ATG8 family proteins. Required for canonical autophagy (macroautophagy), non-canonical autophagy as well as for mitophagy. The protease activity is required for proteolytic activation of ATG8 family proteins: cleaves the C-terminal amino acid of ATG8 proteins MAP1LC3A, MAP1LC3B, MAP1LC3C, GABARAPL1, GABARAPL2 and GABARAP, to reveal a C-terminal glycine. Exposure of the glycine at the C-terminus is essential for ATG8 proteins conjugation to phosphatidylethanolamine (PE) and insertion to membranes, which is necessary for autophagy. Protease activity is also required to counteract formation of high-molecular weight conjugates of ATG8 proteins (ATG8ylation): acts as a deubiquitinating-like enzyme that removes ATG8 conjugated to other proteins, such as ATG3. In addition to the protease activity, also mediates delipidation of ATG8 family proteins. Catalyzes delipidation of PE-conjugated forms of ATG8 proteins during macroautophagy. Also involved in non-canonical autophagy, a parallel pathway involving conjugation of ATG8 proteins to single membranes at endolysosomal compartments, by catalyzing delipidation of ATG8 proteins conjugated to phosphatidylserine (PS). Compared to other members of the family (ATG4A, ATG4C or ATG4C), constitutes the major protein for proteolytic activation of ATG8 proteins, while it displays weaker delipidation activity than other ATG4 paralogs. Involved in phagophore growth during mitophagy independently of its protease activity and of ATG8 proteins: acts by regulating ATG9A trafficking to mitochondria and promoting phagophore-endoplasmic reticulum contacts during the lipid transfer phase of mitophagy. Its function is as follows. (Microbial infection) Mediates cleavage of an ATG8 protein homolog coded in the genome of cytopathogenic bovine viral diarrhea virus (BVDV). The protein is Cysteine protease ATG4B (ATG4B) of Bos taurus (Bovine).